The chain runs to 342 residues: MSGFSPASEVLLRHSDDFTESRVLFAGDMQDDLPARFDTAQSRAHTQQFHHWQVLSKPMGDNARYGLVADAEIVADSDTLIYYWPKNKPEAQFQLMNLLSLLPVGTDVFVVGENRSGVRSAEAMLEAHCPLNKVDSARRCGLYHGRLEKQPEFNADGWWGEYQVDDLTIKTLPGVFSRDGLDVGSDLLLSTLSPHTKGKVLDVGCGAGVLAAVLASHSPKVRLTLCDVSAPAVEASRATLAANGFEGEVVASNVFSEIKGRFDMIISNPPFHDGMETSFEAAQTLIRSAVRHLNIGGELRIVANAFLPYPNVLDETFGNHEVLAQTGRFKVYRAVMGRNAKR.

Belongs to the methyltransferase superfamily. RsmC family. As to quaternary structure, monomer.

It is found in the cytoplasm. The enzyme catalyses guanosine(1207) in 16S rRNA + S-adenosyl-L-methionine = N(2)-methylguanosine(1207) in 16S rRNA + S-adenosyl-L-homocysteine + H(+). In terms of biological role, specifically methylates the guanine in position 1207 of 16S rRNA in the 30S particle. In Cronobacter sakazakii (strain ATCC BAA-894) (Enterobacter sakazakii), this protein is Ribosomal RNA small subunit methyltransferase C.